Here is a 131-residue protein sequence, read N- to C-terminus: Histone H2A.2 (131 aa).

Serine 2 carries the N-acetylserine modification. 2 positions are modified to N6-acetyllysine: lysine 5 and lysine 8. Glutamine 106 bears the N5-methylglutamine mark. Position 128 is a phosphoserine (serine 128). The short motif at 128-129 is the [ST]-Q motif element; sequence SQ.

The protein belongs to the histone H2A family. In terms of assembly, the nucleosome is a histone octamer containing two molecules each of H2A, H2B, H3 and H4 assembled in one H3-H4 heterotetramer and two H2A-H2B heterodimers. The octamer wraps approximately 147 bp of DNA. In terms of processing, phosphorylated to form H2AS128ph (gamma-H2A) in response to DNA double-strand breaks (DSBs) generated by exogenous genotoxic agents and by stalled replication forks. Phosphorylation is dependent on the DNA damage checkpoint kinases MEC1/ATR and TEL1/ATM, spreads on either side of a detected DSB site and may mark the surrounding chromatin for recruitment of proteins required for DNA damage signaling and repair. Gamma-H2A is removed from the DNA prior to the strand invasion-primer extension step of the repair process and subsequently dephosphorylated by PPH3, a component of the histone H2A phosphatase complex (HTP-C). Dephosphorylation is necessary for efficient recovery from the DNA damage checkpoint. Post-translationally, acetylated by ESA1 to form H2AK4ac and H2AK7ac.

It localises to the nucleus. The protein localises to the chromosome. Functionally, core component of nucleosome which plays a central role in DNA double strand break (DSB) repair. Nucleosomes wrap and compact DNA into chromatin, limiting DNA accessibility to the cellular machineries which require DNA as a template. Histones thereby play a central role in transcription regulation, DNA repair, DNA replication and chromosomal stability. DNA accessibility is regulated via a complex set of post-translational modifications of histones, also called histone code, and nucleosome remodeling. This chain is Histone H2A.2 (HTA2), found in Candida glabrata (strain ATCC 2001 / BCRC 20586 / JCM 3761 / NBRC 0622 / NRRL Y-65 / CBS 138) (Yeast).